Reading from the N-terminus, the 69-residue chain is U-scoloptoxin(21)-Sm2a (69 aa).

A signal peptide spans 1–21; it reads MFFLGFIIVCASEEQSDNRLP. The tract at residues 46–69 is disordered; that stretch reads ANDPNGPGRRRRSPIVREEILRHP. Over residues 60 to 69 the composition is skewed to basic and acidic residues; it reads IVREEILRHP.

Belongs to the scoloptoxin-21 family. Expressed by the venom gland.

Its subcellular location is the secreted. The protein is U-scoloptoxin(21)-Sm2a of Scolopendra morsitans (Tanzanian blue ringleg centipede).